A 1595-amino-acid chain; its full sequence is Pentafunctional AROM polypeptide (1595 aa).

Residues 1–384 (MGVPTKISIL…HEPRASTVSN (384 aa)) form a 3-dehydroquinate synthase region. NAD(+) is bound by residues 44–46 (DTN), 81–84 (ESSK), 114–116 (GGV), and Asp119. Arg130 is a 7-phospho-2-dehydro-3-deoxy-D-arabino-heptonate binding site. 139-140 (TT) contacts NAD(+). 2 residues coordinate 7-phospho-2-dehydro-3-deoxy-D-arabino-heptonate: Asp146 and Lys152. Residue Lys161 coordinates NAD(+). Asn162 is a binding site for 7-phospho-2-dehydro-3-deoxy-D-arabino-heptonate. Residues 179-182 (FLNT) and Asn190 contribute to the NAD(+) site. Residue Glu194 coordinates Zn(2+). 7-phospho-2-dehydro-3-deoxy-D-arabino-heptonate-binding positions include 194-197 (EVIK) and Lys250. Catalysis depends on Glu260, which acts as the Proton acceptor; for 3-dehydroquinate synthase activity. 7-phospho-2-dehydro-3-deoxy-D-arabino-heptonate contacts are provided by residues 264–268 (RNLLN) and His271. Residue His271 coordinates Zn(2+). The active-site Proton acceptor; for 3-dehydroquinate synthase activity is His275. Residues His287 and Lys356 each coordinate 7-phospho-2-dehydro-3-deoxy-D-arabino-heptonate. Zn(2+) is bound at residue His287. An EPSP synthase region spans residues 397–842 (VSPGVPKGLD…WDSLAQTFKV (446 aa)). The For EPSP synthase activity role is filled by Cys824. The segment at 866 to 1057 (ASIFIIGMRG…RRKENTFFVS (192 aa)) is shikimate kinase. ATP is bound at residue 872–879 (GMRGAGKT). The interval 1058–1278 (LTLPDLGLAA…AAPGQLSARE (221 aa)) is 3-dehydroquinase. His1181 serves as the catalytic Proton acceptor; for 3-dehydroquinate dehydratase activity. Lys1209 serves as the catalytic Schiff-base intermediate with substrate; for 3-dehydroquinate dehydratase activity. Residues 1291-1595 (AKKFAVIGNP…MGVLPSEDIS (305 aa)) are shikimate dehydrogenase.

This sequence in the N-terminal section; belongs to the sugar phosphate cyclases superfamily. Dehydroquinate synthase family. In the 2nd section; belongs to the EPSP synthase family. The protein in the 3rd section; belongs to the shikimate kinase family. It in the 4th section; belongs to the type-I 3-dehydroquinase family. This sequence in the C-terminal section; belongs to the shikimate dehydrogenase family. Homodimer. Requires Zn(2+) as cofactor.

The protein localises to the cytoplasm. The enzyme catalyses 7-phospho-2-dehydro-3-deoxy-D-arabino-heptonate = 3-dehydroquinate + phosphate. The catalysed reaction is 3-dehydroquinate = 3-dehydroshikimate + H2O. It carries out the reaction shikimate + NADP(+) = 3-dehydroshikimate + NADPH + H(+). It catalyses the reaction shikimate + ATP = 3-phosphoshikimate + ADP + H(+). The enzyme catalyses 3-phosphoshikimate + phosphoenolpyruvate = 5-O-(1-carboxyvinyl)-3-phosphoshikimate + phosphate. It functions in the pathway metabolic intermediate biosynthesis; chorismate biosynthesis; chorismate from D-erythrose 4-phosphate and phosphoenolpyruvate: step 2/7. Its pathway is metabolic intermediate biosynthesis; chorismate biosynthesis; chorismate from D-erythrose 4-phosphate and phosphoenolpyruvate: step 3/7. The protein operates within metabolic intermediate biosynthesis; chorismate biosynthesis; chorismate from D-erythrose 4-phosphate and phosphoenolpyruvate: step 4/7. It participates in metabolic intermediate biosynthesis; chorismate biosynthesis; chorismate from D-erythrose 4-phosphate and phosphoenolpyruvate: step 5/7. It functions in the pathway metabolic intermediate biosynthesis; chorismate biosynthesis; chorismate from D-erythrose 4-phosphate and phosphoenolpyruvate: step 6/7. In terms of biological role, the AROM polypeptide catalyzes 5 consecutive enzymatic reactions in prechorismate polyaromatic amino acid biosynthesis. This is Pentafunctional AROM polypeptide from Ajellomyces capsulatus (strain H143) (Darling's disease fungus).